The chain runs to 158 residues: MIRATSVTAKFDRAFDTITLDETARHRRRMMMRSDNGIEFLLDLPEARLLNHGDGLLLEDGRVIEVRALPEPLYEVRGRDSRHLLALAWQIGNRHLPAEIAEDRILIRRDHVIRDMLEGLGAMVTDITAPFSPEGGAYQAHSHDGHSHHQGHTHDHHD.

Positions 133 to 158 (PEGGAYQAHSHDGHSHHQGHTHDHHD) are disordered. Over residues 141–158 (HSHDGHSHHQGHTHDHHD) the composition is skewed to basic and acidic residues.

It belongs to the UreE family.

The protein localises to the cytoplasm. Functionally, involved in urease metallocenter assembly. Binds nickel. Probably functions as a nickel donor during metallocenter assembly. The protein is Urease accessory protein UreE of Chelativorans sp. (strain BNC1).